Reading from the N-terminus, the 122-residue chain is Large ribosomal subunit protein uL14c (122 aa).

This sequence belongs to the universal ribosomal protein uL14 family. Part of the 50S ribosomal subunit.

Its subcellular location is the plastid. The protein localises to the chloroplast. Binds to 23S rRNA. In Populus trichocarpa (Western balsam poplar), this protein is Large ribosomal subunit protein uL14c.